A 399-amino-acid polypeptide reads, in one-letter code: RNA polymerase sigma factor SigA1 (399 aa).

A disordered region spans residues 1 to 73; sequence MTQLISIDKE…DEDSVGEDED (73 aa). Residues 60 to 73 are compositionally biased toward acidic residues; sequence DAIDDEDSVGEDED. The sigma-70 factor domain-2 stretch occupies residues 167–237; it reads MVQSNLRLVV…TRAIADQSRT (71 aa). Residues 191–194 carry the Interaction with polymerase core subunit RpoC motif; sequence DLIQ. The tract at residues 246–321 is sigma-70 factor domain-3; sequence ETISRIKKTT…EADGETPEDE (76 aa). The interval 334–387 is sigma-70 factor domain-4; that stretch reads VLSTLSPRERDVLRLRYGLDDGRMKTLEEIGQLFNVTRERIRQIEAKALRKLRH. The H-T-H motif DNA-binding region spans 360–379; sequence LEEIGQLFNVTRERIRQIEA.

Belongs to the sigma-70 factor family. RpoD/SigA subfamily. As to quaternary structure, interacts transiently with the RNA polymerase catalytic core.

The protein localises to the cytoplasm. Its function is as follows. Sigma factors are initiation factors that promote the attachment of RNA polymerase to specific initiation sites and are then released. This sigma factor is the primary sigma factor during exponential growth. In Synechococcus elongatus (strain ATCC 33912 / PCC 7942 / FACHB-805) (Anacystis nidulans R2), this protein is RNA polymerase sigma factor SigA1.